We begin with the raw amino-acid sequence, 299 residues long: tRNA dimethylallyltransferase (299 aa).

13–20 (GPTASGKT) lines the ATP pocket. 15-20 (TASGKT) provides a ligand contact to substrate. Residues 38-41 (DSRQ) form an interaction with substrate tRNA region.

It belongs to the IPP transferase family. Monomer. Requires Mg(2+) as cofactor.

The enzyme catalyses adenosine(37) in tRNA + dimethylallyl diphosphate = N(6)-dimethylallyladenosine(37) in tRNA + diphosphate. Catalyzes the transfer of a dimethylallyl group onto the adenine at position 37 in tRNAs that read codons beginning with uridine, leading to the formation of N6-(dimethylallyl)adenosine (i(6)A). This chain is tRNA dimethylallyltransferase, found in Parasynechococcus marenigrum (strain WH8102).